A 122-amino-acid polypeptide reads, in one-letter code: Urease subunit beta (122 aa).

It belongs to the urease beta subunit family. As to quaternary structure, heterotrimer of UreA (gamma), UreB (beta) and UreC (alpha) subunits. Three heterotrimers associate to form the active enzyme.

The protein localises to the cytoplasm. It carries out the reaction urea + 2 H2O + H(+) = hydrogencarbonate + 2 NH4(+). It functions in the pathway nitrogen metabolism; urea degradation; CO(2) and NH(3) from urea (urease route): step 1/1. The protein is Urease subunit beta of Flavobacterium johnsoniae (strain ATCC 17061 / DSM 2064 / JCM 8514 / BCRC 14874 / CCUG 350202 / NBRC 14942 / NCIMB 11054 / UW101) (Cytophaga johnsonae).